The chain runs to 523 residues: BTB/POZ domain-containing protein 3 (523 aa).

One copy of the ANK repeat lies at 85–114 (FDYSPLVLASLCGHEPVVKFLLENGALCER). BTB domains are found at residues 167–223 (TDIV…RYLY) and 306–373 (HDAY…DIAP).

Interacts with cul3. Ubiquitinated and targeted for cul3-dependent degradation.

It localises to the cytoplasm. It functions in the pathway protein modification; protein ubiquitination. Probable substrate-specific adapter of an E3 ubiquitin-protein ligase complex which mediates the ubiquitination and subsequent proteasomal degradation of target proteins. The sequence is that of BTB/POZ domain-containing protein 3 (btb3) from Schizosaccharomyces pombe (strain 972 / ATCC 24843) (Fission yeast).